The following is a 447-amino-acid chain: Ribosomal protein uS12 methylthiotransferase RimO (447 aa).

The MTTase N-terminal domain maps to 4 to 114 (PKVGFVSLGC…VMEAVHEYVP (111 aa)). Positions 13, 49, 78, 147, 151, and 154 each coordinate [4Fe-4S] cluster. One can recognise a Radical SAM core domain in the interval 133–370 (LTPKHYAYLK…MQVQQQISAA (238 aa)). Residues 373–443 (QKRIGQTMTV…EYDLFAKLIK (71 aa)) form the TRAM domain.

Belongs to the methylthiotransferase family. RimO subfamily. [4Fe-4S] cluster serves as cofactor.

The protein resides in the cytoplasm. It carries out the reaction L-aspartate(89)-[ribosomal protein uS12]-hydrogen + (sulfur carrier)-SH + AH2 + 2 S-adenosyl-L-methionine = 3-methylsulfanyl-L-aspartate(89)-[ribosomal protein uS12]-hydrogen + (sulfur carrier)-H + 5'-deoxyadenosine + L-methionine + A + S-adenosyl-L-homocysteine + 2 H(+). Its function is as follows. Catalyzes the methylthiolation of an aspartic acid residue of ribosomal protein uS12. The protein is Ribosomal protein uS12 methylthiotransferase RimO of Acinetobacter baumannii (strain AB0057).